A 512-amino-acid polypeptide reads, in one-letter code: Histidine ammonia-lyase (512 aa).

The segment at residues 144–146 (ASG) is a cross-link (5-imidazolinone (Ala-Gly)). A 2,3-didehydroalanine (Ser) modification is found at Ser145.

It belongs to the PAL/histidase family. In terms of processing, contains an active site 4-methylidene-imidazol-5-one (MIO), which is formed autocatalytically by cyclization and dehydration of residues Ala-Ser-Gly.

The protein resides in the cytoplasm. The enzyme catalyses L-histidine = trans-urocanate + NH4(+). It participates in amino-acid degradation; L-histidine degradation into L-glutamate; N-formimidoyl-L-glutamate from L-histidine: step 1/3. The polypeptide is Histidine ammonia-lyase (Desulfotalea psychrophila (strain LSv54 / DSM 12343)).